The sequence spans 208 residues: Small ribosomal subunit protein uS4 (208 aa).

Positions Arg-98–Met-161 constitute an S4 RNA-binding domain.

The protein belongs to the universal ribosomal protein uS4 family. In terms of assembly, part of the 30S ribosomal subunit. Contacts protein S5. The interaction surface between S4 and S5 is involved in control of translational fidelity.

Its function is as follows. One of the primary rRNA binding proteins, it binds directly to 16S rRNA where it nucleates assembly of the body of the 30S subunit. In terms of biological role, with S5 and S12 plays an important role in translational accuracy. The chain is Small ribosomal subunit protein uS4 from Helicobacter acinonychis (strain Sheeba).